A 235-amino-acid chain; its full sequence is Cell division protein FtsQ (235 aa).

Over 1–6 (MERLTR) the chain is Cytoplasmic. Residues 7–25 (WLLVMMAMLLAASGLVWFY) traverse the membrane as a helical segment. Residues 26-235 (NSNHLPVKQV…DGLPEKESEE (210 aa)) are Periplasmic-facing. In terms of domain architecture, POTRA spans 30–99 (LPVKQVSLKG…DTVEVVLTER (70 aa)).

It belongs to the FtsQ/DivIB family. FtsQ subfamily. As to quaternary structure, part of a complex composed of FtsB, FtsL and FtsQ.

It localises to the cell inner membrane. Its function is as follows. Essential cell division protein. May link together the upstream cell division proteins, which are predominantly cytoplasmic, with the downstream cell division proteins, which are predominantly periplasmic. May control correct divisome assembly. This is Cell division protein FtsQ from Neisseria meningitidis serogroup B (strain ATCC BAA-335 / MC58).